The sequence spans 301 residues: Tyrosine recombinase XerC (301 aa).

One can recognise a Core-binding (CB) domain in the interval 1-89; sequence MGLDGLAAYL…SWRQYCVWLV (89 aa). The 181-residue stretch at 110-290 folds into the Tyr recombinase domain; sequence RVPKALPQEW…DFDHIARLYD (181 aa). Active-site residues include Arg-151, Lys-175, His-242, Arg-245, and His-268. Residue Tyr-277 is the O-(3'-phospho-DNA)-tyrosine intermediate of the active site.

Belongs to the 'phage' integrase family. XerC subfamily. As to quaternary structure, forms a cyclic heterotetrameric complex composed of two molecules of XerC and two molecules of XerD.

Its subcellular location is the cytoplasm. In terms of biological role, site-specific tyrosine recombinase, which acts by catalyzing the cutting and rejoining of the recombining DNA molecules. The XerC-XerD complex is essential to convert dimers of the bacterial chromosome into monomers to permit their segregation at cell division. It also contributes to the segregational stability of plasmids. This chain is Tyrosine recombinase XerC, found in Neisseria meningitidis serogroup B (strain ATCC BAA-335 / MC58).